The primary structure comprises 156 residues: Ribosomal RNA large subunit methyltransferase H (156 aa).

S-adenosyl-L-methionine-binding positions include Leu-73, Gly-104, and 123 to 128 (LSSLTL).

The protein belongs to the RNA methyltransferase RlmH family. Homodimer.

The protein localises to the cytoplasm. It catalyses the reaction pseudouridine(1915) in 23S rRNA + S-adenosyl-L-methionine = N(3)-methylpseudouridine(1915) in 23S rRNA + S-adenosyl-L-homocysteine + H(+). Specifically methylates the pseudouridine at position 1915 (m3Psi1915) in 23S rRNA. This Neisseria meningitidis serogroup A / serotype 4A (strain DSM 15465 / Z2491) protein is Ribosomal RNA large subunit methyltransferase H.